The sequence spans 315 residues: Ribonuclease Z (315 aa).

Residues His-62, His-64, Asp-66, His-67, His-144, Asp-215, and His-273 each contribute to the Zn(2+) site. The Proton acceptor role is filled by Asp-66.

Belongs to the RNase Z family. In terms of assembly, homodimer. It depends on Zn(2+) as a cofactor.

The catalysed reaction is Endonucleolytic cleavage of RNA, removing extra 3' nucleotides from tRNA precursor, generating 3' termini of tRNAs. A 3'-hydroxy group is left at the tRNA terminus and a 5'-phosphoryl group is left at the trailer molecule.. Functionally, zinc phosphodiesterase, which displays some tRNA 3'-processing endonuclease activity. Probably involved in tRNA maturation, by removing a 3'-trailer from precursor tRNA. The protein is Ribonuclease Z of Synechococcus sp. (strain CC9311).